We begin with the raw amino-acid sequence, 426 residues long: MEQLTLNPIGKINGEIFLPGSKSLSNRALLIAALANGVTKITNLLVSDDINHMLNALKSLGIEYTLSDCGTECTVIGNGGFFNAKKPLELYLGNAGTAMRPLCAALAASEGEFILTGEPRMKERPIGHLVDALAQLDADIEYLENKDYPPVKIKGKALTGNTVTIDGSISSQFLTAILMIAPLLETNTTIEIDGELVSKPYIDITLDIMRRFNVSVQNNDYKSFIVNGKQSYQALDKYMVEGDASSASYFLAAGAIKGGEVTVHGIGKLSVQGDKHFADVLEKMGAEIHWKDESITVIGKPLTAVDMDMNHIPDAAMTIATTALFATGTTTIRNIYNWRVKETDRLNAMATELRKVGAEVVEGKDYISITPPKSLKHAEIDTYNDHRVAMCFSLVALSDTPVTINDPKCTAKTFPDYFDKLAQVSC.

The 3-phosphoshikimate site is built by Lys22, Ser23, and Arg27. Lys22 lines the phosphoenolpyruvate pocket. Phosphoenolpyruvate-binding residues include Gly96 and Arg124. 3-phosphoshikimate contacts are provided by Ser170, Ser171, Gln172, Ser198, Asp314, Asn337, and Lys341. Gln172 is a binding site for phosphoenolpyruvate. Catalysis depends on Asp314, which acts as the Proton acceptor. The phosphoenolpyruvate site is built by Arg345, Arg387, and Lys412.

The protein belongs to the EPSP synthase family. Monomer.

The protein localises to the cytoplasm. The enzyme catalyses 3-phosphoshikimate + phosphoenolpyruvate = 5-O-(1-carboxyvinyl)-3-phosphoshikimate + phosphate. It functions in the pathway metabolic intermediate biosynthesis; chorismate biosynthesis; chorismate from D-erythrose 4-phosphate and phosphoenolpyruvate: step 6/7. Its function is as follows. Catalyzes the transfer of the enolpyruvyl moiety of phosphoenolpyruvate (PEP) to the 5-hydroxyl of shikimate-3-phosphate (S3P) to produce enolpyruvyl shikimate-3-phosphate and inorganic phosphate. The chain is 3-phosphoshikimate 1-carboxyvinyltransferase from Colwellia psychrerythraea (strain 34H / ATCC BAA-681) (Vibrio psychroerythus).